The primary structure comprises 750 residues: Photosystem I P700 chlorophyll a apoprotein A1 (750 aa).

The next 8 membrane-spanning stretches (helical) occupy residues 70 to 93 (VFSA…FHGA), 156 to 179 (LYCT…FHYH), 195 to 219 (LNHH…HVSL), 291 to 309 (IAHH…GHMY), 346 to 369 (WHAQ…HHMY), 385 to 411 (LSLF…IFMV), 433 to 455 (AIIS…LYIH), and 531 to 549 (FLVH…LILL). Residues Cys-573 and Cys-582 each coordinate [4Fe-4S] cluster. Transmembrane regions (helical) follow at residues 589–610 (HVFL…HFSW) and 664–686 (LSAY…MFLF). Chlorophyll a' is bound at residue His-675. Residues Met-683 and Tyr-691 each coordinate chlorophyll a. Trp-692 serves as a coordination point for phylloquinone. The chain crosses the membrane as a helical span at residues 724 to 744 (AVGVTHYLLGGIATTWAFFLA).

The protein belongs to the PsaA/PsaB family. As to quaternary structure, the PsaA/B heterodimer binds the P700 chlorophyll special pair and subsequent electron acceptors. PSI consists of a core antenna complex that captures photons, and an electron transfer chain that converts photonic excitation into a charge separation. The eukaryotic PSI reaction center is composed of at least 11 subunits. It depends on P700 is a chlorophyll a/chlorophyll a' dimer, A0 is one or more chlorophyll a, A1 is one or both phylloquinones and FX is a shared 4Fe-4S iron-sulfur center. as a cofactor.

The protein localises to the plastid. It is found in the chloroplast thylakoid membrane. The catalysed reaction is reduced [plastocyanin] + hnu + oxidized [2Fe-2S]-[ferredoxin] = oxidized [plastocyanin] + reduced [2Fe-2S]-[ferredoxin]. Its function is as follows. PsaA and PsaB bind P700, the primary electron donor of photosystem I (PSI), as well as the electron acceptors A0, A1 and FX. PSI is a plastocyanin-ferredoxin oxidoreductase, converting photonic excitation into a charge separation, which transfers an electron from the donor P700 chlorophyll pair to the spectroscopically characterized acceptors A0, A1, FX, FA and FB in turn. Oxidized P700 is reduced on the lumenal side of the thylakoid membrane by plastocyanin. This chain is Photosystem I P700 chlorophyll a apoprotein A1, found in Agrostis stolonifera (Creeping bentgrass).